The following is a 647-amino-acid chain: Probable squalene--hopene cyclase (647 aa).

One copy of the PFTB 1 repeat lies at 67 to 108 (EAKIGNYLRRTQGAHGGWPLVHDGPFDMSASVKSYFALKMIG). Asp-388 acts as the Proton donor in catalysis. PFTB repeat units lie at residues 413–454 (IARG…GALL) and 530–577 (IRKA…ALLG).

Belongs to the terpene cyclase/mutase family.

The catalysed reaction is squalene = hop-22(29)-ene. The enzyme catalyses squalene + H2O = hopan-22-ol. The protein operates within secondary metabolite biosynthesis; hopanoid biosynthesis. In terms of biological role, catalyzes the cyclization of squalene into hopene. Probably part of an operon y4aABCD involved in the synthesis of an isoprenoid compound. The chain is Probable squalene--hopene cyclase (shc) from Sinorhizobium fredii (strain NBRC 101917 / NGR234).